Here is a 99-residue protein sequence, read N- to C-terminus: Gibberellin-regulated protein 2 (99 aa).

An N-terminal signal peptide occupies residues 1 to 26 (MAVFRSTLVLLLIIVCLTTYELHVHA).

The protein belongs to the GASA family. Post-translationally, six disulfide bonds may be present. In terms of tissue distribution, dry seeds and maturating siliques.

The protein resides in the secreted. Its function is as follows. Gibberellin-regulated protein that may function in hormonal controlled steps of development such as seed germination, flowering and seed maturation. This chain is Gibberellin-regulated protein 2 (GASA2), found in Arabidopsis thaliana (Mouse-ear cress).